Reading from the N-terminus, the 38-residue chain is Photosystem II reaction center protein X (38 aa).

A helical transmembrane segment spans residues 9 to 29 (ISSLTAGGLVVLTIAVALIVI).

Belongs to the PsbX family. Type 1 subfamily. As to quaternary structure, PSII is composed of 1 copy each of membrane proteins PsbA, PsbB, PsbC, PsbD, PsbE, PsbF, PsbH, PsbI, PsbJ, PsbK, PsbL, PsbM, PsbT, PsbX, PsbY, PsbZ, Psb30/Ycf12, at least 3 peripheral proteins of the oxygen-evolving complex and a large number of cofactors. It forms dimeric complexes.

The protein resides in the plastid. Its subcellular location is the chloroplast thylakoid membrane. In terms of biological role, involved in the binding and/or turnover of quinones at the Q(B) site of photosystem II (PSII). PSII is a light-driven water plastoquinone oxidoreductase, using light energy to abstract electrons from H(2)O, generating a proton gradient subsequently used for ATP formation. The sequence is that of Photosystem II reaction center protein X from Trieres chinensis (Marine centric diatom).